We begin with the raw amino-acid sequence, 601 residues long: ATP-dependent lipid A-core flippase (601 aa).

The ABC transmembrane type-1 domain occupies 28-328 (LLSVCGLIVY…LTRVNAEFQR (301 aa)). Transmembrane regions (helical) follow at residues 32 to 52 (CGLIVYGLVDAAFISFIGPFI), 81 to 101 (VLLMAPIVVILMFSLRGFANF), 160 to 180 (ALISIVRDGVTVIGMLGLMFY), 183 to 203 (WKLSLCILVIGPIMGLVITIV), 267 to 287 (AVSQPLIMVIGSFALAFVLYA), and 296 to 316 (DLTAGTFATILGAMMAMLQPI). Residues 360–597 (LRFDNVSFSY…GGMYAKLYQM (238 aa)) enclose the ABC transporter domain. 394–401 (GRSGSGKS) lines the ATP pocket.

Belongs to the ABC transporter superfamily. Lipid exporter (TC 3.A.1.106) family. Homodimer.

Its subcellular location is the cell inner membrane. The enzyme catalyses ATP + H2O + lipid A-core oligosaccharideSide 1 = ADP + phosphate + lipid A-core oligosaccharideSide 2.. In terms of biological role, involved in lipopolysaccharide (LPS) biosynthesis. Translocates lipid A-core from the inner to the outer leaflet of the inner membrane. Transmembrane domains (TMD) form a pore in the inner membrane and the ATP-binding domain (NBD) is responsible for energy generation. This is ATP-dependent lipid A-core flippase from Shewanella sp. (strain MR-4).